Here is a 438-residue protein sequence, read N- to C-terminus: Na(+)/H(+) antiporter NhaA (438 aa).

A run of 11 helical transmembrane segments spans residues 23 to 43, 62 to 82, 104 to 124, 133 to 153, 162 to 182, 185 to 205, 221 to 241, 302 to 322, 337 to 357, 372 to 392, and 410 to 430; these read FGGIFLFLNAVLAMVVANSFL, FFIGFSLHNWIDDVLMALFFL, SFPVIAAIGGMIAPGLIYFFL, GFGIPMATDIAFALGVIMLLG, VFLITLAVADDLGAIVVIALF, TNLKFAWLLGALGVVLILAVL, VLLWFCVHQSGIHATIAAVIL, FLAPISGYFIMPLFAFANAGV, LGVILGLCLGKPLGIFLITFI, WWHILGAGLLAGIGFTMSMFI, and IAILLGSLISGIIGALYLFAL.

This sequence belongs to the NhaA Na(+)/H(+) (TC 2.A.33) antiporter family.

The protein localises to the cell inner membrane. The enzyme catalyses Na(+)(in) + 2 H(+)(out) = Na(+)(out) + 2 H(+)(in). In terms of biological role, na(+)/H(+) antiporter that extrudes sodium in exchange for external protons. This chain is Na(+)/H(+) antiporter NhaA, found in Helicobacter pylori (strain HPAG1).